The following is a 390-amino-acid chain: 8-amino-7-oxononanoate synthase (390 aa).

Arg-19 is a substrate binding site. 106–107 lines the pyridoxal 5'-phosphate pocket; that stretch reads GY. His-131 contributes to the substrate binding site. Residues Ser-176, His-204, and Thr-233 each contribute to the pyridoxal 5'-phosphate site. An N6-(pyridoxal phosphate)lysine modification is found at Lys-236. Residue Thr-350 coordinates substrate.

It belongs to the class-II pyridoxal-phosphate-dependent aminotransferase family. BioF subfamily. As to quaternary structure, homodimer. Pyridoxal 5'-phosphate is required as a cofactor.

It carries out the reaction 6-carboxyhexanoyl-[ACP] + L-alanine + H(+) = (8S)-8-amino-7-oxononanoate + holo-[ACP] + CO2. Its pathway is cofactor biosynthesis; biotin biosynthesis. Functionally, catalyzes the decarboxylative condensation of pimeloyl-[acyl-carrier protein] and L-alanine to produce 8-amino-7-oxononanoate (AON), [acyl-carrier protein], and carbon dioxide. The chain is 8-amino-7-oxononanoate synthase from Pseudomonas putida (strain ATCC 700007 / DSM 6899 / JCM 31910 / BCRC 17059 / LMG 24140 / F1).